The sequence spans 301 residues: D-alanine--D-alanine ligase A (301 aa).

Residues 99 to 293 (KRILAFGNVR…FEELLDTIIE (195 aa)) enclose the ATP-grasp domain. 126-181 (IENLGYPVFVKPNNGGSSVATTLVESKEAVKDAVLEALKYDTEVMIEEYIKGDEIT) provides a ligand contact to ATP. The Mg(2+) site is built by Asp-248, Glu-260, and Asn-262.

The protein belongs to the D-alanine--D-alanine ligase family. Mg(2+) serves as cofactor. It depends on Mn(2+) as a cofactor.

The protein resides in the cytoplasm. It catalyses the reaction 2 D-alanine + ATP = D-alanyl-D-alanine + ADP + phosphate + H(+). The protein operates within cell wall biogenesis; peptidoglycan biosynthesis. In terms of biological role, cell wall formation. The protein is D-alanine--D-alanine ligase A of Clostridium perfringens (strain 13 / Type A).